We begin with the raw amino-acid sequence, 251 residues long: Lactose phosphotransferase system repressor (251 aa).

Residues 3 to 58 enclose the HTH deoR-type domain; sequence KEERLEEITKLINKRGTIRVTEVVERLKVSDMTVRRDLTELEGLGVLTRIHGGARS. Residues 20 to 39 constitute a DNA-binding region (H-T-H motif); that stretch reads IRVTEVVERLKVSDMTVRRD.

Functionally, repressor of the lactose catabolism operon. Galactose-6-phosphate is the inducer. This is Lactose phosphotransferase system repressor (lacR) from Streptococcus mutans serotype c (strain ATCC 700610 / UA159).